A 110-amino-acid polypeptide reads, in one-letter code: MTELMRIAALFAATALAEIVGCYLPWLVLKAGRPAWLLVPAALSLALFAWLLTLHPSAAGRTYAAYGGVYIAVALIWLRVVDGVALTRWDVAGAVLALGGMAVIALQPRA.

Helical transmembrane passes span 9-29, 34-54, 66-86, and 88-108; these read ALFAATALAEIVGCYLPWLVL, PAWLLVPAALSLALFAWLLTL, YGGVYIAVALIWLRVVDGVAL, and RWDVAGAVLALGGMAVIALQP.

Belongs to the UPF0060 family.

The protein localises to the cell inner membrane. In Burkholderia orbicola (strain AU 1054), this protein is UPF0060 membrane protein Bcen_0802.